The primary structure comprises 1515 residues: MAGNLVSWACKLCRSPEGFGPISFYGDFTQCFIDGVILNLSAIFMITFGIRDLVNLCKKKHSGIKYRRNWIIVSRMALVLLEIAFVSLASLNISKEEAENFTIVSQYASTMLSLFVALALHWIEYDRSVVANTVLLFYWLFETFGNFAKLINILIRHTYEGIWYSGQTGFILTLFQVITCASILLLEALPKKPLMPHQHIHQTLTRRKPNPYDSANIFSRITFSWMSGLMKTGYEKYLVEADLYKLPRNFSSEELSQKLEKNWENELKQKSNPSLSWAICRTFGSKMLLAAFFKAIHDVLAFTQPQLLRILIKFVTDYNSERQDDHSSLQGFENNHPQKLPIVRGFLIAFAMFLVGFTQTSVLHQYFLNVFNTGMYIKSALTALIYQKSLVLSNEASGLSSTGDIVNLMSVDVQKLQDLTQWLNLIWSGPFQIIICLYSLYKLLGNSMWVGVIILVIMMPLNSFLMRIQKKLQKSQMKYKDERTRVISEILNNIKSLKLYAWEKPYREKLEEVRNNKELKNLTKLGCYMAVTSFQFNIVPFLVSCCTFAVFVYTEDRALTTDLVFPALTLFNLLSFPLMIIPMVLNSFIEASVSIGRLFTFFTNEELQPDSVQRLPKVKNIGDVAINIGDDATFLWQRKPEYKVALKNINFQAKKGNLTCIVGKVGSGKTALLSCMLGDLFRVKGFATVHGSVAYVSQVPWIMNGTVKENILFGHRYDAEFYEKTIKACALTIDLAILMDGDKTLVGEKGISLSGGQKARLSLARAVYARADTYLLDDPLAAVDEHVARHLIEHVLGPNGLLHTKTKVLATNKVSALSIADSIALLDNGEITQQGTYDEITKDADSPLWKLLNNYGKKNNGKSNEFGDSSESSVRESSIPVEGELEQLQKLNDLDFGNSDAISLRRASDATLGSIDFGDDENIAKREHREQGKVKWNIYLEYAKACNPKSVCVFILFIVISMFLSVMGNVWLKHWSEVNSRYGSNPNAARYLAIYFALGIGSALATLIQTIVLWVFCTIHASKYLHNLMTNSVLRAPMTFFETTPIGRILNRFSNDIYKVDALLGRTFSQFFVNAVKVTFTITVICATTWQFIFIIIPLSVFYIYYQQYYLRTSRELRRLDSITRSPIYSHFQETLGGLATVRGYSQQKRFSHINQCRIDNNMSAFYPSINANRWLAYRLELIGSIIILGAATLSVFRLKQGTLTAGMVGLSLSYALQITQTLNWIVRMTVEVETNIVSVERIKEYADLKSEAPLIVEGHRPPKEWPSQGDIKFNNYSTRYRPELDLVLKHINIHIKPNEKVGIVGRTGAGKSSLTLALFRMIEASEGNIVIDNIAINEIGLYDLRHKLSIIPQDSQVFEGTVRENIDPINQYTDEAIWRALELSHLKEHVLSMSNDGLDAQLTEGGGNLSVGQRQLLCLARAMLVPSKILVLDEATAAVDVETDKVVQETIRTAFKDRTILTIAHRLNTIMDSDRIIVLDNGKVAEFDSPGQLLSDNKSLFYSLCMEAGLVNEN.

Topologically, residues Met1–Phe32 are vacuolar. The chain crosses the membrane as a helical span at residues Ile33–Leu53. Residues Val54 to Val73 lie on the Cytoplasmic side of the membrane. The chain crosses the membrane as a helical span at residues Ser74–Ser94. The Vacuolar segment spans residues Lys95–Glu99. Residues Asn100–Leu120 traverse the membrane as a helical segment. Topologically, residues His121 to Val130 are cytoplasmic. A helical membrane pass occupies residues Ala131–Ile151. Residues Asn152 to Gly169 are Vacuolar-facing. A helical transmembrane segment spans residues Phe170 to Pro190. Topologically, residues Lys191–Ala278 are cytoplasmic. Ser251 bears the Phosphoserine mark. A helical transmembrane segment spans residues Ile279 to Val299. Residues Met287–Glu590 enclose the ABC transmembrane type-1 1 domain. Topologically, residues Leu300–Gly345 are vacuolar. A helical transmembrane segment spans residues Phe346–Tyr366. Topologically, residues Phe367–Trp422 are cytoplasmic. Residues Leu423 to Leu443 traverse the membrane as a helical segment. The Vacuolar portion of the chain corresponds to Leu444–Asn446. A helical transmembrane segment spans residues Ser447 to Arg467. At Ile468–Ala530 the chain is on the cytoplasmic side. A helical transmembrane segment spans residues Val531–Phe551. Topologically, residues Val552–Asn572 are vacuolar. Residues Leu573–Val593 form a helical membrane-spanning segment. At Ser594–Ala943 the chain is on the cytoplasmic side. Residues Ile626 to Asn853 enclose the ABC transporter 1 domain. Position 663 to 670 (Gly663 to Thr670) interacts with ATP. Phosphoserine occurs at positions 873, 903, and 908. Residue Thr911 is modified to Phosphothreonine. Ser914 is modified (phosphoserine). A helical transmembrane segment spans residues Lys944–Leu964. In terms of domain architecture, ABC transmembrane type-1 2 spans Val951 to Thr1235. Residues Ser965–Gly1001 are Vacuolar-facing. The helical transmembrane segment at Ser1002 to Lys1023 threads the bilayer. The Cytoplasmic portion of the chain corresponds to Tyr1024 to Arg1066. Residues Thr1067 to Ala1087 form a helical membrane-spanning segment. A topological domain (vacuolar) is located at residue Thr1088. A helical transmembrane segment spans residues Thr1089–Tyr1109. Topologically, residues Tyr1110–Leu1180 are cytoplasmic. Residues Glu1181 to Gln1201 traverse the membrane as a helical segment. Topologically, residues Gly1202–Thr1205 are vacuolar. The chain crosses the membrane as a helical span at residues Ala1206–Ile1226. The Cytoplasmic segment spans residues Val1227 to Asn1515. The ABC transporter 2 domain occupies Ile1272 to Met1507. An ATP-binding site is contributed by Gly1306 to Ser1313.

It belongs to the ABC transporter superfamily. ABCC family. Conjugate transporter (TC 3.A.1.208) subfamily.

Its subcellular location is the vacuole membrane. It carries out the reaction Cd(2+)(in) + ATP + H2O = Cd(2+)(out) + ADP + phosphate + H(+). The enzyme catalyses an S-substituted glutathione(in) + ATP + H2O = an S-substituted glutathione(out) + ADP + phosphate + H(+). Cooperates for the ATP-dependent vacuolar transport of bilirubin and glutathione conjugates. The chain is Metal resistance protein YCF1 (YCF1) from Saccharomyces cerevisiae (strain ATCC 204508 / S288c) (Baker's yeast).